The sequence spans 692 residues: Elongation factor G (692 aa).

A tr-type G domain is found at 8-283 (EDYRNFGIMA…AVVDYLPSPL (276 aa)). GTP contacts are provided by residues 17–24 (AHIDAGKT), 81–85 (DTPGH), and 135–138 (NKMD).

The protein belongs to the TRAFAC class translation factor GTPase superfamily. Classic translation factor GTPase family. EF-G/EF-2 subfamily.

It is found in the cytoplasm. In terms of biological role, catalyzes the GTP-dependent ribosomal translocation step during translation elongation. During this step, the ribosome changes from the pre-translocational (PRE) to the post-translocational (POST) state as the newly formed A-site-bound peptidyl-tRNA and P-site-bound deacylated tRNA move to the P and E sites, respectively. Catalyzes the coordinated movement of the two tRNA molecules, the mRNA and conformational changes in the ribosome. This Caulobacter sp. (strain K31) protein is Elongation factor G.